The sequence spans 224 residues: Urease accessory protein UreF (224 aa).

The protein belongs to the UreF family. UreD, UreF and UreG form a complex that acts as a GTP-hydrolysis-dependent molecular chaperone, activating the urease apoprotein by helping to assemble the nickel containing metallocenter of UreC. The UreE protein probably delivers the nickel.

It localises to the cytoplasm. Its function is as follows. Required for maturation of urease via the functional incorporation of the urease nickel metallocenter. This Pseudomonas fluorescens (strain ATCC BAA-477 / NRRL B-23932 / Pf-5) protein is Urease accessory protein UreF.